The sequence spans 151 residues: Metallothiol transferase FosB (151 aa).

A VOC domain is found at 4 to 119 (SINHVTYSVS…DGHKFELHTG (116 aa)). Residues His7, His66, and Glu115 each contribute to the Mg(2+) site. The active-site Proton donor/acceptor is Glu115.

It belongs to the fosfomycin resistance protein family. FosB subfamily. Homodimer. Requires Mg(2+) as cofactor.

It is found in the cytoplasm. Functionally, metallothiol transferase which confers resistance to fosfomycin by catalyzing the addition of a thiol cofactor to fosfomycin. L-cysteine is probably the physiological thiol donor. This is Metallothiol transferase FosB from Staphylococcus saprophyticus subsp. saprophyticus (strain ATCC 15305 / DSM 20229 / NCIMB 8711 / NCTC 7292 / S-41).